The following is a 398-amino-acid chain: Acetate kinase (398 aa).

N8 provides a ligand contact to Mg(2+). K15 lines the ATP pocket. Position 89 (R89) interacts with substrate. Residue D146 is the Proton donor/acceptor of the active site. Residues H206–G210, D283–R285, and G331–N335 each bind ATP. E383 provides a ligand contact to Mg(2+).

The protein belongs to the acetokinase family. Homodimer. The cofactor is Mg(2+). Requires Mn(2+) as cofactor.

The protein resides in the cytoplasm. The enzyme catalyses acetate + ATP = acetyl phosphate + ADP. It functions in the pathway metabolic intermediate biosynthesis; acetyl-CoA biosynthesis; acetyl-CoA from acetate: step 1/2. Its function is as follows. Catalyzes the formation of acetyl phosphate from acetate and ATP. Can also catalyze the reverse reaction. In Streptococcus pyogenes serotype M1, this protein is Acetate kinase.